The following is a 154-amino-acid chain: uncharacterized protein (154 aa).

A helical transmembrane segment spans residues 23–43 (SAVALVTFAGAALSGVIPAIA).

It localises to the membrane. This is an uncharacterized protein from Mycobacterium tuberculosis (strain CDC 1551 / Oshkosh).